The primary structure comprises 138 residues: Large-conductance mechanosensitive channel (138 aa).

2 helical membrane passes run 10–30 and 76–96; these read FAMR…AAFG and GSFI…FLAI.

Belongs to the MscL family. As to quaternary structure, homopentamer.

The protein resides in the cell inner membrane. In terms of biological role, channel that opens in response to stretch forces in the membrane lipid bilayer. May participate in the regulation of osmotic pressure changes within the cell. In Serratia proteamaculans (strain 568), this protein is Large-conductance mechanosensitive channel.